The chain runs to 143 residues: Putative complexin-1 (143 aa).

Positions 15–71 are disordered; sequence NEVTGGLGLKDDGGEKTETGEDPEVVAARLEQEERRKEKHRKMEQEREKMRQGIRDK. Composition is skewed to basic and acidic residues over residues 23–33 and 44–71; these read LKDDGGEKTET and LEQEERRKEKHRKMEQEREKMRQGIRDK. The stretch at 40 to 71 forms a coiled coil; that stretch reads VAARLEQEERRKEKHRKMEQEREKMRQGIRDK.

This sequence belongs to the complexin/synaphin family.

The protein resides in the cytoplasm. It localises to the cytosol. In terms of biological role, positively regulates a late step in synaptic vesicle exocytosis. This Caenorhabditis briggsae protein is Putative complexin-1 (cpx-1).